Reading from the N-terminus, the 74-residue chain is Chitinases 70, 30, and 20.5 kDa (74 aa).

The segment at 1–27 is N-terminus of 70 kDa chitinase; sequence XTSATATYAKTQDWGSCFEGKWTIKNT. The interval 28 to 52 is N-terminus of 30 kDa chitinase; it reads AACSSYPSWVAGRSYAAGDIVYYTD. Positions 53–74 are N-terminus of 20.5 kDa chitinase; sequence XGYTDLPVSRQKMCQNGMVTNC.

It belongs to the glycosyl hydrolase 18 family. Chitinase class II subfamily. As to quaternary structure, homodimer, but homotrimers and homotetramers could be observed for the 20.5 and 30 kDa chitinases. The 70 kDa chitinase is probably the precursor protein of the 30 and 20.5 kDa chitinases.

It catalyses the reaction Random endo-hydrolysis of N-acetyl-beta-D-glucosaminide (1-&gt;4)-beta-linkages in chitin and chitodextrins.. Functionally, able to cleave chitin oligomers from N=3 to 6. This is Chitinases 70, 30, and 20.5 kDa from Streptomyces olivaceoviridis (Streptomyces corchorusii).